Consider the following 82-residue polypeptide: U24 protein (82 aa).

The PPXY motif signature appears at 7–10 (PPSY). A helical transmembrane segment spans residues 52-72 (FIILACLIISVILCLILILHI).

In terms of assembly, interacts with host ITCH; this interaction probably mediates ITCH degradation. Interacts probably with NEDD4.

It is found in the membrane. Down-regulates of the TCR/CD3E complex and the transferrin receptor TFRC in host T-cells by blocking them from recycling back to the cell surface. The chain is U24 protein from Homo sapiens (Human).